The primary structure comprises 176 residues: Large ribosomal subunit protein uL6 (176 aa).

The protein belongs to the universal ribosomal protein uL6 family. In terms of assembly, part of the 50S ribosomal subunit.

Functionally, this protein binds to the 23S rRNA, and is important in its secondary structure. It is located near the subunit interface in the base of the L7/L12 stalk, and near the tRNA binding site of the peptidyltransferase center. The chain is Large ribosomal subunit protein uL6 from Paraburkholderia xenovorans (strain LB400).